A 543-amino-acid polypeptide reads, in one-letter code: Protein phosphatase 1G (543 aa).

Residue glycine 2 is the site of N-myristoyl glycine attachment. Residue arginine 22 is modified to Omega-N-methylarginine. Residues 26-503 (PYGFSAMQGW…DNMTCIIICF (478 aa)) form the PPM-type phosphatase domain. Residues aspartate 60 and glycine 61 each contribute to the Mn(2+) site. 2 disordered regions span residues 116 to 139 (QIAG…DVDN) and 163 to 326 (NCHK…SDSG). The residue at position 122 (threonine 122) is a Phosphothreonine. Over residues 123 to 139 (EDEDEKEKVADEDDVDN) the composition is skewed to acidic residues. A Phosphoserine modification is found at serine 183. A compositionally biased stretch (acidic residues) spans 259-310 (DSEDESDEAEEEEEDSEECSEEEDGYSSEEAENEEDEDDTEEAEEDDEEEEM). The residue at position 381 (lysine 381) is an N6-acetyllysine. Aspartate 439 and aspartate 494 together coordinate Mn(2+). Residues 508–543 (TAAPQPESGKRKLEEVLSTEGAEENGNSDKKKAKRD) form a disordered region. At serine 525 the chain carries Phosphoserine.

It belongs to the PP2C family. As to quaternary structure, interacts with NOL3; may dephosphorylate NOL3. It depends on Mg(2+) as a cofactor. Requires Mn(2+) as cofactor.

It is found in the cytoplasm. Its subcellular location is the membrane. It carries out the reaction O-phospho-L-seryl-[protein] + H2O = L-seryl-[protein] + phosphate. The enzyme catalyses O-phospho-L-threonyl-[protein] + H2O = L-threonyl-[protein] + phosphate. The chain is Protein phosphatase 1G (PPM1G) from Bos taurus (Bovine).